The chain runs to 316 residues: Acetylglutamate kinase (316 aa).

Residues 65 to 66 (GG), arginine 87, and asparagine 179 contribute to the substrate site.

This sequence belongs to the acetylglutamate kinase family. ArgB subfamily.

The protein localises to the cytoplasm. The enzyme catalyses N-acetyl-L-glutamate + ATP = N-acetyl-L-glutamyl 5-phosphate + ADP. Its pathway is amino-acid biosynthesis; L-arginine biosynthesis; N(2)-acetyl-L-ornithine from L-glutamate: step 2/4. In terms of biological role, catalyzes the ATP-dependent phosphorylation of N-acetyl-L-glutamate. This chain is Acetylglutamate kinase, found in Alkaliphilus metalliredigens (strain QYMF).